The chain runs to 150 residues: Dihydroneopterin triphosphate diphosphatase (150 aa).

Residues V5 to V146 form the Nudix hydrolase domain. Residues K7, R29, and T40 each coordinate substrate. Positions G41–T62 match the Nudix box motif. Residues E56 and E60 each coordinate Mg(2+). F81–F84 lines the substrate pocket. Residue E117 coordinates Mg(2+). S135 is a substrate binding site.

This sequence belongs to the Nudix hydrolase family. Mg(2+) serves as cofactor.

It catalyses the reaction 7,8-dihydroneopterin 3'-triphosphate + H2O = 7,8-dihydroneopterin 3'-phosphate + diphosphate + H(+). In terms of biological role, catalyzes the hydrolysis of dihydroneopterin triphosphate to dihydroneopterin monophosphate and pyrophosphate. Required for efficient folate biosynthesis. Can also hydrolyze nucleoside triphosphates with a preference for dATP. The polypeptide is Dihydroneopterin triphosphate diphosphatase (nudB) (Escherichia coli O157:H7).